Here is a 121-residue protein sequence, read N- to C-terminus: Ribonuclease CL2 (121 aa).

Substrate is bound by residues lysine 6 and arginine 9. Catalysis depends on histidine 11, which acts as the Proton acceptor. Disulfide bonds link cysteine 26/cysteine 81, cysteine 42/cysteine 92, and cysteine 60/cysteine 107. Substrate contacts are provided by residues 43-47 (KPSNT) and arginine 82. The active-site Proton donor is the histidine 114.

This sequence belongs to the pancreatic ribonuclease family.

It is found in the secreted. Functionally, pyrimidine-specific nuclease with preference for C. The sequence is that of Ribonuclease CL2 from Gallus gallus (Chicken).